The chain runs to 278 residues: tRNA (guanine-N(7)-)-methyltransferase (278 aa).

Residues G63, 86–87 (EL), 119–120 (NA), and L139 each bind S-adenosyl-L-methionine. Residue D142 is part of the active site. Position 217 to 219 (217 to 219 (TEE)) interacts with S-adenosyl-L-methionine. The interval 259-278 (IDSTTTTTTSTATITEVESK) is disordered. A compositionally biased stretch (low complexity) spans 261–278 (STTTTTTSTATITEVESK).

The protein belongs to the class I-like SAM-binding methyltransferase superfamily. TrmB family.

It is found in the nucleus. The enzyme catalyses guanosine(46) in tRNA + S-adenosyl-L-methionine = N(7)-methylguanosine(46) in tRNA + S-adenosyl-L-homocysteine. The protein operates within tRNA modification; N(7)-methylguanine-tRNA biosynthesis. Functionally, catalyzes the formation of N(7)-methylguanine at position 46 (m7G46) in tRNA. The polypeptide is tRNA (guanine-N(7)-)-methyltransferase (mettl1) (Dictyostelium discoideum (Social amoeba)).